The following is a 115-amino-acid chain: uncharacterized protein (115 aa).

Residues 36-56 (SFFSLGLIACFCIFLIIVLSE) traverse the membrane as a helical segment.

The protein resides in the membrane. This is an uncharacterized protein from Saccharomyces cerevisiae (strain ATCC 204508 / S288c) (Baker's yeast).